A 796-amino-acid chain; its full sequence is MPTTQQSPQDEQEKLLDEAIQAVKVQSFQMKRCLDKNKLMDALKHASNMLGELRTSMLSPKSYYELYMAISDELHYLEVYLTDEFAKGRKVADLYELVQYAGNIIPRLYLLITVGVVYVKSFPQSRKDILKDLVEMCRGVQHPLRGLFLRNYLLQCTRNILPDEGEPTDEETTGDISDSMDFVLLNFAEMNKLWVRMQHQGHSRDREKRERERQELRILVGTNLVRLSQLEGVNVERYKQIVLTGILEQVVNCRDALAQEYLMECIIQVFPDEFHLQTLNPFLRACAELHQNVNVKNIIIALIDRLALFAHREDGPGIPADIKLFDIFSQQVATVIQSRQDMPSEDVVSLQVSLINLAMKCYPDRVDYVDKVLETTVEIFNKLNLEHIATSSAVSKELTRLLKIPVDTYNNILTVLKLKHFHPLFEYFDYESRKSMSCYVLSNVLDYNTEIVSQDQVDSIMNLVSTLIQDQPDQPVEDPDPEDFADEQSLVGRFIHLLRSEDPDQQYLILNTARKHFGAGGNQRIRFTLPPLVFAAYQLAFRYKENSKVDDKWEKKCQKIFSFAHQTISALIKAELAELPLRLFLQGALAAGEIGFENHETVAYEFMSQAFSLYEDEISDSKAQLAAITLIIGTFERMKCFSEENHEPLRTQCALAASKLLKKPDQGRAVSTCAHLFWSGRNTDKNGEELHGGKRVMECLKKALKIANQCMDPSLQVQLFIEILNRYIYFYEKENDAVTIQVLNQLIQKIREDLPNLESSEETEQINKHFHNTLEHLRLRRESPESEGPIYEGLIL.

Ser-7 carries the post-translational modification Phosphoserine. 2 interaction with SNX3 regions span residues 25-44 (VQSFQMKRCLDKNKLMDALK) and 205-215 (DREKRERERQE). An interaction with SLC11A2 region spans residues 438–796 (CYVLSNVLDY…EGPIYEGLIL (359 aa)). An interaction with IGF2R cytoplasmic domain region spans residues 500-693 (SEDPDQQYLI…DKNGEELHGG (194 aa)). Ser-783 is modified (phosphoserine). Phosphotyrosine is present on Tyr-791.

It belongs to the VPS35 family. In terms of assembly, component of the heterotrimeric retromer cargo-selective complex (CSC), also decribed as vacuolar protein sorting subcomplex (VPS), formed by VPS26 (VPS26A or VPS26B), VPS29 and VPS35. The CSC has a highly elongated structure with VPS26 and VPS29 binding independently at opposite distal ends of VPS35 as central platform. The CSC is believed to associate with variable sorting nexins to form functionally distinct retromer complex variants. The originally described retromer complex (also called SNX-BAR retromer) is a pentamer containing the CSC and a heterodimeric membrane-deforming subcomplex formed between SNX1 or SNX2 and SNX5 or SNX6 (also called SNX-BAR subcomplex); the respective CSC and SNX-BAR subcomplexes associate with low affinity. The CSC associates with SNX3 to form a SNX3-retromer complex. The CSC associates with SNX27, the WASH complex and the SNX-BAR subcomplex to form the SNX27-retromer complex. Interacts with VPS26A, VPS26B, VPS29, SNX1, SNX2, IGF2R, SNX3, GOLPH3, LRRK2, SLC11A2, WASHC2A, WASHC2C, FKBP15, WASHC1, RAB7A, SNX27, WASHC5, EHD1. Interacts with MAGEL2; leading to recruitment of the TRIM27:MAGEL2 E3 ubiquitin ligase complex retromer-containing endosomes. Interacts with SORCS2. (Microbial infection) Interacts with human papillomavirus 16 minor capsid protein L2 (via C-terminus); this interaction mediates the transport of the capsid from the early endosome to the Golgi apparatus. In terms of tissue distribution, ubiquitous. Highly expressed in heart, brain, placenta, skeletal muscle, spleen, thymus, testis, ovary, small intestine, kidney and colon.

Its subcellular location is the cytoplasm. It is found in the membrane. The protein resides in the endosome. The protein localises to the early endosome. It localises to the late endosome. Functionally, acts as a component of the retromer cargo-selective complex (CSC). The CSC is believed to be the core functional component of retromer or respective retromer complex variants acting to prevent missorting of selected transmembrane cargo proteins into the lysosomal degradation pathway. The recruitment of the CSC to the endosomal membrane involves RAB7A and SNX3. The CSC seems to associate with the cytoplasmic domain of cargo proteins predominantly via VPS35; however, these interactions seem to be of low affinity and retromer SNX proteins may also contribute to cargo selectivity thus questioning the classical function of the CSC. The SNX-BAR retromer mediates retrograde transport of cargo proteins from endosomes to the trans-Golgi network (TGN) and is involved in endosome-to-plasma membrane transport for cargo protein recycling. The SNX3-retromer mediates the retrograde endosome-to-TGN transport of WLS distinct from the SNX-BAR retromer pathway. The SNX27-retromer is believed to be involved in endosome-to-plasma membrane trafficking and recycling of a broad spectrum of cargo proteins. The CSC seems to act as recruitment hub for other proteins, such as the WASH complex and TBC1D5. Required for retrograde transport of lysosomal enzyme receptor IGF2R and SLC11A2. Required to regulate transcytosis of the polymeric immunoglobulin receptor (pIgR-pIgA). Required for endosomal localization of WASHC2C. Mediates the association of the CSC with the WASH complex via WASHC2. Required for the endosomal localization of TBC1D5. Its function is as follows. (Microbial infection) The heterotrimeric retromer cargo-selective complex (CSC) mediates the exit of human papillomavirus from the early endosome and the delivery to the Golgi apparatus. The protein is Vacuolar protein sorting-associated protein 35 of Homo sapiens (Human).